The primary structure comprises 173 residues: ATP synthase subunit b (173 aa).

The helical transmembrane segment at 20–40 (IIATLAIFLVLMFLLKKVAWG) threads the bilayer.

This sequence belongs to the ATPase B chain family. In terms of assembly, F-type ATPases have 2 components, F(1) - the catalytic core - and F(0) - the membrane proton channel. F(1) has five subunits: alpha(3), beta(3), gamma(1), delta(1), epsilon(1). F(0) has three main subunits: a(1), b(2) and c(10-14). The alpha and beta chains form an alternating ring which encloses part of the gamma chain. F(1) is attached to F(0) by a central stalk formed by the gamma and epsilon chains, while a peripheral stalk is formed by the delta and b chains.

It localises to the cell membrane. In terms of biological role, f(1)F(0) ATP synthase produces ATP from ADP in the presence of a proton or sodium gradient. F-type ATPases consist of two structural domains, F(1) containing the extramembraneous catalytic core and F(0) containing the membrane proton channel, linked together by a central stalk and a peripheral stalk. During catalysis, ATP synthesis in the catalytic domain of F(1) is coupled via a rotary mechanism of the central stalk subunits to proton translocation. Its function is as follows. Component of the F(0) channel, it forms part of the peripheral stalk, linking F(1) to F(0). The polypeptide is ATP synthase subunit b (Lysinibacillus sphaericus (strain C3-41)).